The sequence spans 284 residues: Bifunctional protein FolD (284 aa).

Residues 166 to 168 and Ile-232 contribute to the NADP(+) site; that span reads GAS.

The protein belongs to the tetrahydrofolate dehydrogenase/cyclohydrolase family. As to quaternary structure, homodimer.

The enzyme catalyses (6R)-5,10-methylene-5,6,7,8-tetrahydrofolate + NADP(+) = (6R)-5,10-methenyltetrahydrofolate + NADPH. It catalyses the reaction (6R)-5,10-methenyltetrahydrofolate + H2O = (6R)-10-formyltetrahydrofolate + H(+). It participates in one-carbon metabolism; tetrahydrofolate interconversion. Functionally, catalyzes the oxidation of 5,10-methylenetetrahydrofolate to 5,10-methenyltetrahydrofolate and then the hydrolysis of 5,10-methenyltetrahydrofolate to 10-formyltetrahydrofolate. This is Bifunctional protein FolD from Pseudomonas fluorescens (strain ATCC BAA-477 / NRRL B-23932 / Pf-5).